Reading from the N-terminus, the 86-residue chain is Large ribosomal subunit protein bL27 (86 aa).

Residues 1-22 form a disordered region; the sequence is MATKKAGGSSRNGRDSAGRRLG.

The protein belongs to the bacterial ribosomal protein bL27 family.

The polypeptide is Large ribosomal subunit protein bL27 (Rickettsia rickettsii (strain Iowa)).